Consider the following 244-residue polypeptide: Proteasome subunit alpha (244 aa).

It belongs to the peptidase T1A family. The 20S proteasome core is composed of 14 alpha and 14 beta subunits that assemble into four stacked heptameric rings, resulting in a barrel-shaped structure. The two inner rings, each composed of seven catalytic beta subunits, are sandwiched by two outer rings, each composed of seven alpha subunits. The catalytic chamber with the active sites is on the inside of the barrel. Has a gated structure, the ends of the cylinder being occluded by the N-termini of the alpha-subunits. Is capped by the proteasome-associated ATPase, ARC.

The protein localises to the cytoplasm. The protein operates within protein degradation; proteasomal Pup-dependent pathway. Its activity is regulated as follows. The formation of the proteasomal ATPase ARC-20S proteasome complex, likely via the docking of the C-termini of ARC into the intersubunit pockets in the alpha-rings, may trigger opening of the gate for substrate entry. Interconversion between the open-gate and close-gate conformations leads to a dynamic regulation of the 20S proteasome proteolysis activity. Component of the proteasome core, a large protease complex with broad specificity involved in protein degradation. The chain is Proteasome subunit alpha from Xylanimonas cellulosilytica (strain DSM 15894 / JCM 12276 / CECT 5975 / KCTC 9989 / LMG 20990 / NBRC 107835 / XIL07).